Here is a 230-residue protein sequence, read N- to C-terminus: 3-dehydroquinate dehydratase (230 aa).

Residues Ser-26, 51 to 53 (EIR), and Arg-84 contribute to the 3-dehydroquinate site. The active-site Proton donor/acceptor is His-127. Residue Lys-150 is the Schiff-base intermediate with substrate of the active site. Residues Arg-190, Thr-209, and Gln-213 each coordinate 3-dehydroquinate.

Belongs to the type-I 3-dehydroquinase family. Homodimer.

It catalyses the reaction 3-dehydroquinate = 3-dehydroshikimate + H2O. Its pathway is metabolic intermediate biosynthesis; chorismate biosynthesis; chorismate from D-erythrose 4-phosphate and phosphoenolpyruvate: step 3/7. In terms of biological role, involved in the third step of the chorismate pathway, which leads to the biosynthesis of aromatic amino acids. Catalyzes the cis-dehydration of 3-dehydroquinate (DHQ) and introduces the first double bond of the aromatic ring to yield 3-dehydroshikimate. This Thermoplasma volcanium (strain ATCC 51530 / DSM 4299 / JCM 9571 / NBRC 15438 / GSS1) protein is 3-dehydroquinate dehydratase.